We begin with the raw amino-acid sequence, 222 residues long: Peptide methionine sulfoxide reductase MsrA (222 aa).

Residue cysteine 60 is part of the active site.

It belongs to the MsrA Met sulfoxide reductase family.

It carries out the reaction L-methionyl-[protein] + [thioredoxin]-disulfide + H2O = L-methionyl-(S)-S-oxide-[protein] + [thioredoxin]-dithiol. The enzyme catalyses [thioredoxin]-disulfide + L-methionine + H2O = L-methionine (S)-S-oxide + [thioredoxin]-dithiol. Has an important function as a repair enzyme for proteins that have been inactivated by oxidation. Catalyzes the reversible oxidation-reduction of methionine sulfoxide in proteins to methionine. In Pseudomonas putida (strain ATCC 47054 / DSM 6125 / CFBP 8728 / NCIMB 11950 / KT2440), this protein is Peptide methionine sulfoxide reductase MsrA.